The primary structure comprises 416 residues: 4-hydroxy-3-methylbut-2-en-1-yl diphosphate synthase (flavodoxin) (416 aa).

[4Fe-4S] cluster contacts are provided by Cys-304, Cys-307, Cys-350, and Glu-357.

It belongs to the IspG family. Requires [4Fe-4S] cluster as cofactor.

It carries out the reaction (2E)-4-hydroxy-3-methylbut-2-enyl diphosphate + oxidized [flavodoxin] + H2O + 2 H(+) = 2-C-methyl-D-erythritol 2,4-cyclic diphosphate + reduced [flavodoxin]. Its pathway is isoprenoid biosynthesis; isopentenyl diphosphate biosynthesis via DXP pathway; isopentenyl diphosphate from 1-deoxy-D-xylulose 5-phosphate: step 5/6. Its function is as follows. Converts 2C-methyl-D-erythritol 2,4-cyclodiphosphate (ME-2,4cPP) into 1-hydroxy-2-methyl-2-(E)-butenyl 4-diphosphate. This is 4-hydroxy-3-methylbut-2-en-1-yl diphosphate synthase (flavodoxin) from Rhizobium leguminosarum bv. trifolii (strain WSM2304).